Here is a 428-residue protein sequence, read N- to C-terminus: Histidine--tRNA ligase (428 aa).

Belongs to the class-II aminoacyl-tRNA synthetase family. In terms of assembly, homodimer.

The protein resides in the cytoplasm. The catalysed reaction is tRNA(His) + L-histidine + ATP = L-histidyl-tRNA(His) + AMP + diphosphate + H(+). This is Histidine--tRNA ligase from Thermosynechococcus vestitus (strain NIES-2133 / IAM M-273 / BP-1).